Consider the following 329-residue polypeptide: Ribosomal RNA small subunit methyltransferase H (329 aa).

Residues 39 to 41 (GGY), Asp56, Phe85, Asp106, and Gln113 each bind S-adenosyl-L-methionine. Residues 289–308 (SGAIRPTPEEEARNPRARSA) form a disordered region.

Belongs to the methyltransferase superfamily. RsmH family.

It is found in the cytoplasm. It catalyses the reaction cytidine(1402) in 16S rRNA + S-adenosyl-L-methionine = N(4)-methylcytidine(1402) in 16S rRNA + S-adenosyl-L-homocysteine + H(+). Functionally, specifically methylates the N4 position of cytidine in position 1402 (C1402) of 16S rRNA. This is Ribosomal RNA small subunit methyltransferase H from Novosphingobium aromaticivorans (strain ATCC 700278 / DSM 12444 / CCUG 56034 / CIP 105152 / NBRC 16084 / F199).